Consider the following 58-residue polypeptide: Light-harvesting protein B-875 alpha chain (58 aa).

Residues 1–15 (MSKFYKIWMIFDPRR) lie on the Cytoplasmic side of the membrane. A helical membrane pass occupies residues 16 to 36 (VFVAQGVFLFLLAVMIHLILL). His32 contacts a bacteriochlorophyll. Over 37 to 58 (STPSYNWLEISAAKYNRVAVAE) the chain is Periplasmic.

This sequence belongs to the antenna complex alpha subunit family. As to quaternary structure, the core complex is formed by different alpha and beta chains, binding bacteriochlorophyll molecules, and arranged most probably in tetrameric structures disposed around the reaction center. The non-pigmented gamma chains may constitute additional components.

Its subcellular location is the cell inner membrane. Functionally, antenna complexes are light-harvesting systems, which transfer the excitation energy to the reaction centers. This Cereibacter sphaeroides (strain ATCC 17023 / DSM 158 / JCM 6121 / CCUG 31486 / LMG 2827 / NBRC 12203 / NCIMB 8253 / ATH 2.4.1.) (Rhodobacter sphaeroides) protein is Light-harvesting protein B-875 alpha chain (pufA).